Here is a 774-residue protein sequence, read N- to C-terminus: 1,4-alpha-glucan branching enzyme GlgB 1 (774 aa).

Residues 1 to 66 form a disordered region; that stretch reads MTPRPSSSGP…AEVAVSPAPD (66 aa). A compositionally biased stretch (basic residues) spans 29 to 40; sequence KPAKAAKKKAPR. A compositionally biased stretch (low complexity) spans 41 to 55; the sequence is RTTASANASATTSVS. The active-site Nucleophile is the D457. Catalysis depends on E510, which acts as the Proton donor. A disordered region spans residues 748-774; sequence YGGGDVVNPDPVKPEPQGGTAARRASG.

This sequence belongs to the glycosyl hydrolase 13 family. GlgB subfamily. In terms of assembly, monomer.

It catalyses the reaction Transfers a segment of a (1-&gt;4)-alpha-D-glucan chain to a primary hydroxy group in a similar glucan chain.. It functions in the pathway glycan biosynthesis; glycogen biosynthesis. Functionally, catalyzes the formation of the alpha-1,6-glucosidic linkages in glycogen by scission of a 1,4-alpha-linked oligosaccharide from growing alpha-1,4-glucan chains and the subsequent attachment of the oligosaccharide to the alpha-1,6 position. This Streptomyces coelicolor (strain ATCC BAA-471 / A3(2) / M145) protein is 1,4-alpha-glucan branching enzyme GlgB 1 (glgB1).